We begin with the raw amino-acid sequence, 441 residues long: MQLYDSLSKTKKNLNKKTINLYCCGPTVYNYIHIGNARPVILVDVLTRYLKSRNIKINYLQNITDIDDKIILKALDNNLTELEISQKYTKAYLEDLESLNINQPDKIILISEKMNEMVKFIKDLVDIKAAYELDGDVYFDIKKYQNEYCKLSGYKLDELISGKRIEIDSKKKYSLDFSLWKKTQIGIKWDSFFGLGRPGWHTECVLLIDEYFNHQTIDIHVGGIDLKFPHHENERIQFIAKNNKELADIWLHNGHLQINDEKMSKSLGNVILVKDFIKKHNKNTLRWIFLTTNYTQPLNISDDLIYQANKFFEKLTNLSKKTIQFIIKNDLKISLIKQSKYIDQFNNYMDDDLNTSLVLSLIDSLIKQINKNILDNISDNFNLLISSLSYILDVLGFKDVFNYKFKKEIKELFLKWQQLVKDKEFDKADLIRKDLIEQGIL.

Cys-24 is a binding site for Zn(2+). A 'HIGH' region motif is present at residues Pro-26–Asn-36. 3 residues coordinate Zn(2+): Cys-204, His-230, and Glu-234. A 'KMSKS' region motif is present at residues Lys-262 to Ser-266. Lys-265 is a binding site for ATP.

It belongs to the class-I aminoacyl-tRNA synthetase family. Monomer. The cofactor is Zn(2+).

The protein resides in the cytoplasm. It carries out the reaction tRNA(Cys) + L-cysteine + ATP = L-cysteinyl-tRNA(Cys) + AMP + diphosphate. This Mycoplasma capricolum subsp. capricolum (strain California kid / ATCC 27343 / NCTC 10154) protein is Cysteine--tRNA ligase.